The following is a 680-amino-acid chain: DNA-directed RNA polymerase subunit beta' (680 aa).

Residues Cys69, Cys71, Cys87, and Cys90 each contribute to the Zn(2+) site. Positions 489, 491, and 493 each coordinate Mg(2+).

Belongs to the RNA polymerase beta' chain family. RpoC1 subfamily. As to quaternary structure, in plastids the minimal PEP RNA polymerase catalytic core is composed of four subunits: alpha, beta, beta', and beta''. When a (nuclear-encoded) sigma factor is associated with the core the holoenzyme is formed, which can initiate transcription. Mg(2+) is required as a cofactor. It depends on Zn(2+) as a cofactor.

Its subcellular location is the plastid. The protein resides in the chloroplast. It carries out the reaction RNA(n) + a ribonucleoside 5'-triphosphate = RNA(n+1) + diphosphate. Its function is as follows. DNA-dependent RNA polymerase catalyzes the transcription of DNA into RNA using the four ribonucleoside triphosphates as substrates. The protein is DNA-directed RNA polymerase subunit beta' of Manihot esculenta (Cassava).